Consider the following 118-residue polypeptide: UPF0295 protein BCE33L0445 (118 aa).

A run of 2 helical transmembrane segments spans residues 12-32 (IRTF…LGVF) and 43-63 (FMMV…WIGM).

It belongs to the UPF0295 family.

The protein resides in the cell membrane. This is UPF0295 protein BCE33L0445 from Bacillus cereus (strain ZK / E33L).